The sequence spans 563 residues: 5-aminolevulinate synthase, mitochondrial (563 aa).

Residues 1 to 18 constitute a mitochondrion transit peptide; sequence MESLVRQSKKLCPYIGRT. 3 residues coordinate substrate: Arg-137, Ser-251, and Lys-270. The pyridoxal 5'-phosphate site is built by Ser-303, His-331, and Thr-373. Residue Lys-376 is part of the active site. Residue Lys-376 is modified to N6-(pyridoxal phosphate)lysine. Pyridoxal 5'-phosphate-binding residues include Thr-405 and Thr-406. A substrate-binding site is contributed by Thr-491.

It belongs to the class-II pyridoxal-phosphate-dependent aminotransferase family. Homodimer. Requires pyridoxal 5'-phosphate as cofactor.

The protein localises to the mitochondrion matrix. The catalysed reaction is succinyl-CoA + glycine + H(+) = 5-aminolevulinate + CO2 + CoA. The protein operates within porphyrin-containing compound metabolism; protoporphyrin-IX biosynthesis; 5-aminolevulinate from glycine: step 1/1. Its function is as follows. Catalyzes the synthesis of 5-aminolevulinate (ALA) from succinyl-CoA and glycine, the first and rate-limiting step in heme biosynthesis. The chain is 5-aminolevulinate synthase, mitochondrial (HEM1) from Yarrowia lipolytica (strain CLIB 122 / E 150) (Yeast).